The sequence spans 331 residues: MPEVLLVATPGTRIYVRRGVVYAEAPSGEKAVVTADTELVVLATGSVSVSGRALRRLAELGVRLVVLGQRGQVVAEHRPVDRVNRTIEARMEQYRVKATGEALYYAAEMVYAKIVNQAKLLRYLAKSRREPWLRDAGYRVEGHADRLRQIIENEEPTTPEVIRSIEAQAARDYWDAIAQIAPTPFPGRQPRGEDHLNMALSYGYAILYSIAHDALTVAGLDPYAGFLHADRSGRPSLTYDYADTYKPIAVDKPLLTAPRKTDCLDTYMGALTYNARRCIATLVLENIYKTPYPDSRGRKKTLRDHIYTYAWNLAAAIRQHKPYKPFIVGRL.

Mn(2+)-binding residues include glutamate 166, histidine 228, and aspartate 243.

This sequence belongs to the CRISPR-associated endonuclease Cas1 family. In terms of assembly, homodimer, forms a heterotetramer with a Cas2 homodimer. It depends on Mg(2+) as a cofactor. Mn(2+) serves as cofactor.

Its function is as follows. CRISPR (clustered regularly interspaced short palindromic repeat), is an adaptive immune system that provides protection against mobile genetic elements (viruses, transposable elements and conjugative plasmids). CRISPR clusters contain spacers, sequences complementary to antecedent mobile elements, and target invading nucleic acids. CRISPR clusters are transcribed and processed into CRISPR RNA (crRNA). Acts as a dsDNA endonuclease. Involved in the integration of spacer DNA into the CRISPR cassette. The protein is CRISPR-associated endonuclease Cas1 of Hyperthermus butylicus (strain DSM 5456 / JCM 9403 / PLM1-5).